Reading from the N-terminus, the 229-residue chain is Ras-related protein RABA6b (229 aa).

Position 20-27 (20-27 (GDSAVGKS)) interacts with GTP. Positions 42–50 (SKPTIGVDF) match the Effector region motif. GTP is bound by residues 68-72 (DTAGQ), 126-129 (NKSD), and 156-157 (SA). Residues Cys226 and Cys227 are each lipidated (S-geranylgeranyl cysteine).

Belongs to the small GTPase superfamily. Rab family.

It is found in the cell membrane. Intracellular vesicle trafficking and protein transport. The polypeptide is Ras-related protein RABA6b (RABA6B) (Arabidopsis thaliana (Mouse-ear cress)).